The sequence spans 123 residues: Ribonuclease P protein component (123 aa).

This sequence belongs to the RnpA family. As to quaternary structure, consists of a catalytic RNA component (M1 or rnpB) and a protein subunit.

The enzyme catalyses Endonucleolytic cleavage of RNA, removing 5'-extranucleotides from tRNA precursor.. Functionally, RNaseP catalyzes the removal of the 5'-leader sequence from pre-tRNA to produce the mature 5'-terminus. It can also cleave other RNA substrates such as 4.5S RNA. The protein component plays an auxiliary but essential role in vivo by binding to the 5'-leader sequence and broadening the substrate specificity of the ribozyme. In Bordetella bronchiseptica (strain ATCC BAA-588 / NCTC 13252 / RB50) (Alcaligenes bronchisepticus), this protein is Ribonuclease P protein component.